A 129-amino-acid chain; its full sequence is Follitropin subunit beta (129 aa).

The first 18 residues, 1 to 18 (MKSVQFCFLFCCWRATCC), serve as a signal peptide directing secretion. Cystine bridges form between cysteine 21–cysteine 69, cysteine 35–cysteine 84, cysteine 38–cysteine 122, cysteine 46–cysteine 100, cysteine 50–cysteine 102, and cysteine 105–cysteine 112. 2 N-linked (GlcNAc...) asparagine glycosylation sites follow: asparagine 25 and asparagine 42.

Belongs to the glycoprotein hormones subunit beta family. As to quaternary structure, heterodimer. The active follitropin is a heterodimer composed of an alpha chain/CGA shared with other hormones and a unique beta chain/FSHB shown here.

It localises to the secreted. Functionally, together with the alpha chain CGA constitutes follitropin, the follicle-stimulating hormone, and provides its biological specificity to the hormone heterodimer. Binds FSHR, a G protein-coupled receptor, on target cells to activate downstream signaling pathways. Follitropin is involved in follicle development and spermatogenesis in reproductive organs. In Cervus nippon (Sika deer), this protein is Follitropin subunit beta (FSHB).